Here is a 292-residue protein sequence, read N- to C-terminus: Secreted frizzled-related protein 2 (292 aa).

The first 20 residues, 1 to 20, serve as a signal peptide directing secretion; it reads MPRRLCALLLLASQCLGSTA. The 121-residue stretch at 32 to 152 folds into the FZ domain; the sequence is YKRSNCKPIP…PKDNDLCIPL (121 aa). Disulfide bonds link Cys-37-Cys-100, Cys-47-Cys-93, Cys-84-Cys-122, Cys-111-Cys-149, Cys-115-Cys-139, Cys-169-Cys-242, and Cys-187-Cys-292. The region spanning 169–292 is the NTR domain; that stretch reads CDACKNKNED…FSRSIRKLQC (124 aa).

It belongs to the secreted frizzled-related protein (sFRP) family.

Its subcellular location is the secreted. Its function is as follows. Soluble frizzled-related proteins (sFRPS) function as modulators of Wnt signaling through direct interaction with Wnts. They have a role in regulating cell growth and differentiation in specific cell types. SFRP2 appears to be associated with myogenesis. In Gallus gallus (Chicken), this protein is Secreted frizzled-related protein 2 (SFRP2).